The primary structure comprises 270 residues: uncharacterized protein (270 aa).

The N-terminal stretch at 1 to 22 (MEYIKKIALYMSVLLLIIFIGG) is a signal peptide. The N-palmitoyl cysteine moiety is linked to residue Cys23. Cys23 is lipidated: S-diacylglycerol cysteine.

It belongs to the staphylococcal tandem lipoprotein family.

Its subcellular location is the cell membrane. This is an uncharacterized protein from Staphylococcus aureus (strain MW2).